The chain runs to 73 residues: Large ribosomal subunit protein uL29 (73 aa).

The tract at residues 1–20 is disordered; sequence MYKAKDLRDQSLEELEATHD.

The protein belongs to the universal ribosomal protein uL29 family.

The sequence is that of Large ribosomal subunit protein uL29 from Protochlamydia amoebophila (strain UWE25).